Reading from the N-terminus, the 290-residue chain is Pyridoxal kinase PdxY (290 aa).

Substrate contacts are provided by residues S12 and 47–48; that span reads TQ. ATP contacts are provided by residues D114, E151, K184, and 211-214; that span reads RPLL. Residue D225 participates in substrate binding.

The protein belongs to the pyridoxine kinase family. PdxY subfamily. As to quaternary structure, homodimer. The cofactor is Mg(2+).

The enzyme catalyses pyridoxal + ATP = pyridoxal 5'-phosphate + ADP + H(+). The protein operates within cofactor metabolism; pyridoxal 5'-phosphate salvage; pyridoxal 5'-phosphate from pyridoxal: step 1/1. Pyridoxal kinase involved in the salvage pathway of pyridoxal 5'-phosphate (PLP). Catalyzes the phosphorylation of pyridoxal to PLP. This is Pyridoxal kinase PdxY from Pseudomonas fluorescens (strain SBW25).